A 239-amino-acid chain; its full sequence is uncharacterized protein (239 aa).

Helical transmembrane passes span 30-50 (VALLISMVVCSLNINILIELI), 76-96 (LYLGIILSSPIIFYEIIIFII), 107-127 (LIPILIASGCLFVAGLIFGYI), 157-177 (FIILSLFSTAISFQIPIFQIL), 188-208 (MMLSVWRYVVVGSTIFSAIIT), and 214-234 (LIQLFLSVAVMFLYFSSILVL).

This sequence belongs to the TatC family.

It localises to the plastid. The protein resides in the chloroplast membrane. This is an uncharacterized protein from Cyanidium caldarium (Red alga).